The sequence spans 572 residues: Proline--tRNA ligase (572 aa).

It belongs to the class-II aminoacyl-tRNA synthetase family. ProS type 1 subfamily. As to quaternary structure, homodimer.

Its subcellular location is the cytoplasm. The catalysed reaction is tRNA(Pro) + L-proline + ATP = L-prolyl-tRNA(Pro) + AMP + diphosphate. Its function is as follows. Catalyzes the attachment of proline to tRNA(Pro) in a two-step reaction: proline is first activated by ATP to form Pro-AMP and then transferred to the acceptor end of tRNA(Pro). As ProRS can inadvertently accommodate and process non-cognate amino acids such as alanine and cysteine, to avoid such errors it has two additional distinct editing activities against alanine. One activity is designated as 'pretransfer' editing and involves the tRNA(Pro)-independent hydrolysis of activated Ala-AMP. The other activity is designated 'posttransfer' editing and involves deacylation of mischarged Ala-tRNA(Pro). The misacylated Cys-tRNA(Pro) is not edited by ProRS. In Alteromonas mediterranea (strain DSM 17117 / CIP 110805 / LMG 28347 / Deep ecotype), this protein is Proline--tRNA ligase.